Reading from the N-terminus, the 148-residue chain is UPF0756 membrane protein KPK_3307 (148 aa).

4 consecutive transmembrane segments (helical) span residues 14–34 (ALGF…LIIV), 51–71 (LTVG…SGTL), 86–106 (LLAI…VSLM), and 121–141 (VLGV…AGII).

The protein belongs to the UPF0756 family.

The protein resides in the cell membrane. In Klebsiella pneumoniae (strain 342), this protein is UPF0756 membrane protein KPK_3307.